A 238-amino-acid chain; its full sequence is Type III pantothenate kinase (238 aa).

Position 7-14 (7-14 (DAGNSGLK)) interacts with ATP. Residues Tyr88 and 95 to 98 (GVDR) contribute to the substrate site. Asp97 acts as the Proton acceptor in catalysis. Asp117 is a binding site for K(+). Thr120 contributes to the ATP binding site. Substrate is bound at residue Thr172.

It belongs to the type III pantothenate kinase family. In terms of assembly, homodimer. The cofactor is NH4(+). K(+) serves as cofactor.

It is found in the cytoplasm. The enzyme catalyses (R)-pantothenate + ATP = (R)-4'-phosphopantothenate + ADP + H(+). The protein operates within cofactor biosynthesis; coenzyme A biosynthesis; CoA from (R)-pantothenate: step 1/5. Catalyzes the phosphorylation of pantothenate (Pan), the first step in CoA biosynthesis. This chain is Type III pantothenate kinase, found in Hahella chejuensis (strain KCTC 2396).